We begin with the raw amino-acid sequence, 542 residues long: Protein phosphatase 1G (542 aa).

Glycine 2 carries N-myristoyl glycine lipidation. Arginine 22 carries the omega-N-methylarginine modification. The region spanning proline 26–phenylalanine 502 is the PPM-type phosphatase domain. Residues aspartate 60 and glycine 61 each coordinate Mn(2+). Disordered regions lie at residues isoleucine 117–aspartate 136 and cysteine 164–glycine 325. Threonine 122 carries the post-translational modification Phosphothreonine. 2 stretches are compositionally biased toward acidic residues: residues glutamate 123–aspartate 136 and aspartate 259–methionine 309. Lysine 380 is subject to N6-acetyllysine. Mn(2+) contacts are provided by aspartate 438 and aspartate 493. The interval glutamate 513–aspartate 542 is disordered. Serine 524 is subject to Phosphoserine.

The protein belongs to the PP2C family. Interacts with NOL3; may dephosphorylate NOL3. Requires Mg(2+) as cofactor. The cofactor is Mn(2+). In terms of tissue distribution, highly expressed in testis. Low level of expression in kidney. Also expressed in a number of tissues undergoing proliferation including embryo, uterus at pregnancy, placenta, and ovaries.

It localises to the nucleus. The protein resides in the membrane. The catalysed reaction is O-phospho-L-seryl-[protein] + H2O = L-seryl-[protein] + phosphate. It catalyses the reaction O-phospho-L-threonyl-[protein] + H2O = L-threonyl-[protein] + phosphate. Functionally, may be involved in regulation of cell cycle. This Mus musculus (Mouse) protein is Protein phosphatase 1G (Ppm1g).